The following is a 264-amino-acid chain: Phosphonates import ATP-binding protein PhnC (264 aa).

Positions 3-246 constitute an ABC transporter domain; it reads IRLQEAGLRH…MLDALYANEQ (244 aa). Residue 35 to 42 participates in ATP binding; sequence GPSGAGKS.

The protein belongs to the ABC transporter superfamily. Phosphonates importer (TC 3.A.1.9.1) family. In terms of assembly, the complex is composed of two ATP-binding proteins (PhnC), two transmembrane proteins (PhnE) and a solute-binding protein (PhnD).

It is found in the cell inner membrane. The enzyme catalyses phosphonate(out) + ATP + H2O = phosphonate(in) + ADP + phosphate + H(+). Part of the ABC transporter complex PhnCDE involved in phosphonates import. Responsible for energy coupling to the transport system. In Pseudomonas entomophila (strain L48), this protein is Phosphonates import ATP-binding protein PhnC.